A 232-amino-acid chain; its full sequence is Probable intron-encoded endonuclease aI3 (232 aa).

This sequence belongs to the LAGLIDADG endonuclease family.

It is found in the mitochondrion. Functionally, mitochondrial DNA endonuclease involved in intron homing. This chain is Probable intron-encoded endonuclease aI3 (aI3), found in Dictyostelium discoideum (Social amoeba).